Reading from the N-terminus, the 315-residue chain is Acetyl-coenzyme A carboxylase carboxyl transferase subunit alpha (315 aa).

The CoA carboxyltransferase C-terminal domain occupies 40–293 (LQDKSKTLTE…REELSSQLAM (254 aa)).

Belongs to the AccA family. In terms of assembly, acetyl-CoA carboxylase is a heterohexamer composed of biotin carboxyl carrier protein (AccB), biotin carboxylase (AccC) and two subunits each of ACCase subunit alpha (AccA) and ACCase subunit beta (AccD).

The protein resides in the cytoplasm. The catalysed reaction is N(6)-carboxybiotinyl-L-lysyl-[protein] + acetyl-CoA = N(6)-biotinyl-L-lysyl-[protein] + malonyl-CoA. Its pathway is lipid metabolism; malonyl-CoA biosynthesis; malonyl-CoA from acetyl-CoA: step 1/1. Functionally, component of the acetyl coenzyme A carboxylase (ACC) complex. First, biotin carboxylase catalyzes the carboxylation of biotin on its carrier protein (BCCP) and then the CO(2) group is transferred by the carboxyltransferase to acetyl-CoA to form malonyl-CoA. This chain is Acetyl-coenzyme A carboxylase carboxyl transferase subunit alpha, found in Pseudomonas savastanoi pv. phaseolicola (strain 1448A / Race 6) (Pseudomonas syringae pv. phaseolicola (strain 1448A / Race 6)).